We begin with the raw amino-acid sequence, 225 residues long: PKHD-type hydroxylase YbiX (225 aa).

The region spanning 78–177 is the Fe2OG dioxygenase domain; the sequence is TLSTPLFNRY…RVASFMWIQS (100 aa). Fe cation is bound by residues His-96, Asp-98, and His-158. Arg-168 is a binding site for 2-oxoglutarate.

Fe(2+) is required as a cofactor. L-ascorbate serves as cofactor.

The sequence is that of PKHD-type hydroxylase YbiX from Shigella boydii serotype 18 (strain CDC 3083-94 / BS512).